Reading from the N-terminus, the 152-residue chain is Mediator of RNA polymerase II transcription subunit 31 (152 aa).

The segment covering 126–144 (DLHVESEEDREKNNEEQAE) has biased composition (basic and acidic residues). Positions 126 to 152 (DLHVESEEDREKNNEEQAEKGSNGATS) are disordered.

It belongs to the Mediator complex subunit 31 family. In terms of assembly, component of the Mediator complex.

It localises to the nucleus. Functionally, component of the Mediator complex, a coactivator involved in the regulated transcription of nearly all RNA polymerase II-dependent genes. Mediator functions as a bridge to convey information from gene-specific regulatory proteins to the basal RNA polymerase II transcription machinery. Mediator is recruited to promoters by direct interactions with regulatory proteins and serves as a scaffold for the assembly of a functional preinitiation complex with RNA polymerase II and the general transcription factors. This Coccidioides immitis (strain RS) (Valley fever fungus) protein is Mediator of RNA polymerase II transcription subunit 31 (SOH1).